We begin with the raw amino-acid sequence, 156 residues long: Small ribosomal subunit protein uS7 (156 aa).

This sequence belongs to the universal ribosomal protein uS7 family. In terms of assembly, part of the 30S ribosomal subunit. Contacts proteins S9 and S11.

Its function is as follows. One of the primary rRNA binding proteins, it binds directly to 16S rRNA where it nucleates assembly of the head domain of the 30S subunit. Is located at the subunit interface close to the decoding center, probably blocks exit of the E-site tRNA. The sequence is that of Small ribosomal subunit protein uS7 from Listeria innocua serovar 6a (strain ATCC BAA-680 / CLIP 11262).